The following is a 119-amino-acid chain: Large ribosomal subunit protein bL20 (119 aa).

Belongs to the bacterial ribosomal protein bL20 family.

In terms of biological role, binds directly to 23S ribosomal RNA and is necessary for the in vitro assembly process of the 50S ribosomal subunit. It is not involved in the protein synthesizing functions of that subunit. The chain is Large ribosomal subunit protein bL20 from Thermoanaerobacter sp. (strain X514).